We begin with the raw amino-acid sequence, 71 residues long: ATP synthase F(0) complex subunit e, mitochondrial (71 aa).

Residue K34 is modified to N6-acetyllysine. S68 carries the post-translational modification Phosphoserine.

Belongs to the ATPase e subunit family. In terms of assembly, component of the ATP synthase complex composed at least of ATP5F1A/subunit alpha, ATP5F1B/subunit beta, ATP5MC1/subunit c (homooctomer), MT-ATP6/subunit a, MT-ATP8/subunit 8, ATP5ME/subunit e, ATP5MF/subunit f, ATP5MG/subunit g, ATP5MK/subunit k, ATP5MJ/subunit j, ATP5F1C/subunit gamma, ATP5F1D/subunit delta, ATP5F1E/subunit epsilon, ATP5PF/subunit F6, ATP5PB/subunit b, ATP5PD/subunit d, ATP5PO/subunit OSCP. ATP synthase complex consists of a soluble F(1) head domain (subunits alpha(3) and beta(3)) - the catalytic core - and a membrane F(0) domain - the membrane proton channel (subunits c, a, 8, e, f, g, k and j). These two domains are linked by a central stalk (subunits gamma, delta, and epsilon) rotating inside the F1 region and a stationary peripheral stalk (subunits F6, b, d, and OSCP).

Its subcellular location is the mitochondrion. The protein resides in the mitochondrion inner membrane. Subunit e, of the mitochondrial membrane ATP synthase complex (F(1)F(0) ATP synthase or Complex V) that produces ATP from ADP in the presence of a proton gradient across the membrane which is generated by electron transport complexes of the respiratory chain. ATP synthase complex consist of a soluble F(1) head domain - the catalytic core - and a membrane F(1) domain - the membrane proton channel. These two domains are linked by a central stalk rotating inside the F(1) region and a stationary peripheral stalk. During catalysis, ATP synthesis in the catalytic domain of F(1) is coupled via a rotary mechanism of the central stalk subunits to proton translocation. In vivo, can only synthesize ATP although its ATP hydrolase activity can be activated artificially in vitro. Part of the complex F(0) domain. This Sus scrofa (Pig) protein is ATP synthase F(0) complex subunit e, mitochondrial.